A 739-amino-acid chain; its full sequence is Poly(A) polymerase alpha (739 aa).

Low complexity predominate over residues 1–17 (MPFPVTTQGSQQTQPPQ). Positions 1 to 23 (MPFPVTTQGSQQTQPPQKHYGIT) are disordered. A phosphoserine mark is found at Ser-10 and Ser-24. ATP contacts are provided by residues 100–102 (FGS), Thr-109, 113–115 (DID), Asp-167, Lys-228, Tyr-237, and 246–247 (GV). Mg(2+)-binding residues include Asp-113, Asp-115, and Asp-167. Glycyl lysine isopeptide (Lys-Gly) (interchain with G-Cter in SUMO) cross-links involve residues Lys-444, Lys-445, Lys-506, and Lys-507. The Nuclear localization signal 1 motif lies at 490–507 (RKQLHQLLPSHVLQKKKK). Disordered stretches follow at residues 501–565 (VLQK…AVTA) and 580–700 (QINS…TIQT). The interval 508–643 (HSTEGVKLTP…AKIPNPIVGV (136 aa)) is ser/Thr-rich. The segment covering 518–534 (LNDSSLDLSMDSDNSMS) has biased composition (low complexity). Positions 535 to 557 (VPSPTSAMKTSPLNSSGSSQGRN) are enriched in polar residues. Phosphoserine; by MAPK is present on Ser-537. Ser-558 carries the phosphoserine modification. The segment covering 583-594 (SSESSGGTSSES) has biased composition (low complexity). Polar residues predominate over residues 595 to 604 (IPQTATQPAI). A compositionally biased stretch (low complexity) spans 611–620 (TVSRVVSSTR). 2 positions are modified to N6-acetyllysine: Lys-635 and Lys-644. Residues 644-659 (KRTSSPHKEESPKKTK) carry the Nuclear localization signal 2 motif. Composition is skewed to basic and acidic residues over residues 649–660 (PHKEESPKKTKT) and 676–686 (GHDKTETKEQL). The segment at 671-739 (CLALSGHDKT…KNSIKLRLNR (69 aa)) is required for interaction with NUDT21. Positions 688–700 (TETSTTQSETIQT) are enriched in low complexity. An N6-acetyllysine; alternate modification is found at Lys-730. Residue Lys-730 forms a Glycyl lysine isopeptide (Lys-Gly) (interchain with G-Cter in SUMO); alternate linkage. Ser-732 bears the Phosphoserine mark. The residue at position 734 (Lys-734) is an N6-acetyllysine; alternate. Residue Lys-734 forms a Glycyl lysine isopeptide (Lys-Gly) (interchain with G-Cter in SUMO); alternate linkage.

This sequence belongs to the poly(A) polymerase family. Monomer. Found in a complex with CPSF1, FIP1L1 and PAPOLA. Interacts with AHCYL1 and FIP1L1; the interaction with AHCYL1 seems to increase interaction with FIP1L1. Interacts with NUDT21; the interaction is diminished by acetylation. Interacts with KPNB1; the interaction promotes PAP nuclear import and is inhibited by acetylation of PAP. The cofactor is Mg(2+). It depends on Mn(2+) as a cofactor. Polysumoylated. Varying sumoylation depending on tissue- and cell-type. Highly sumoylated in bladder and NIH 3T3 cells. Sumoylation is required for nuclear localization and enhances PAP stability. Desumoylated by SENP1. Inhibits polymerase activity. In terms of processing, hyperphosphorylation on multiple CDK2 consensus and non-consensus sites in the C-terminal Ser/Thr-rich region represses PAP activity in late M-phase. Phosphorylation/dephosphorylation may regulate the interaction between PAP and CPSF. Post-translationally, acetylated in the C-terminus. Acetylation decreases interaction with NUDT21 and KPNB1, and inhibits nuclear localization through inhibiting binding to the importin alpha/beta complex.

Its subcellular location is the nucleus. The catalysed reaction is RNA(n) + ATP = RNA(n)-3'-adenine ribonucleotide + diphosphate. Its function is as follows. Polymerase that creates the 3'-poly(A) tail of mRNA's. Also required for the endoribonucleolytic cleavage reaction at some polyadenylation sites. May acquire specificity through interaction with a cleavage and polyadenylation specificity factor (CPSF) at its C-terminus. The sequence is that of Poly(A) polymerase alpha (PAPOLA) from Bos taurus (Bovine).